Reading from the N-terminus, the 446-residue chain is Golgi reassembly-stacking protein 1 (446 aa).

Residues 1-20 (MGLGASSEQPAGGEGFHLHG) are disordered. Gly-2 carries the N-myristoyl glycine lipid modification. PDZ GRASP-type domains are found at residues 14-104 (EGFH…FCSF) and 110-198 (HVWH…YGYL). The GRASP stretch occupies residues 14–214 (EGFHLHGVQE…PSSQHKKPPG (201 aa)). Zn(2+) contacts are provided by His-17, His-19, and Cys-102. The segment at 189 to 201 (LGCGIGYGYLHRI) is essential for interaction with GOLGA2/GM130. Disordered regions lie at residues 202-252 (PTQP…LGSR) and 343-446 (VSGP…EPGL). Phosphothreonine is present on residues Thr-216, Thr-220, and Thr-224. The segment covering 343-354 (VSGPEDIGSSSS) has biased composition (low complexity). Residues Ser-365, Ser-367, and Ser-376 each carry the phosphoserine modification.

The protein belongs to the GORASP family. As to quaternary structure, homodimer. Forms higher-order oligomers under interphase but not mitotic conditions. Dimers of the protein on one membrane might be able to interact with dimers on another and so stack cisternae. Interacts with the C-terminus of GOLGA2/GM130 under both mitotic and non-mitotic conditions. The interaction is critical for the correct targeting of both proteins to the cis-Golgi. Interacts with TMED2 and TMED3. In terms of processing, phosphorylated by CDC2/B1 and PLK kinases during mitosis. Phosphorylation cycle correlates with the cisternal stacking cycle. Phosphorylation of the homodimer prevents the association of dimers into higher-order oligomers, leading to cisternal unstacking. Target for caspase-3 cleavage during apoptosis. The cleavage contributes to Golgi fragmentation and occurs very early in the execution phase of apoptosis. Post-translationally, myristoylated.

It localises to the golgi apparatus. The protein resides in the cis-Golgi network membrane. Key structural protein of the Golgi apparatus. The membrane cisternae of the Golgi apparatus adhere to each other to form stacks, which are aligned side by side to form the Golgi ribbon. Acting in concert with GORASP2/GRASP55, is required for the formation and maintenance of the Golgi ribbon, and may be dispensable for the formation of stacks. However, other studies suggest that GORASP1 plays an important role in assembly and membrane stacking of the cisternae, and in the reassembly of Golgi stacks after breakdown during mitosis. Caspase-mediated cleavage of GORASP1 is required for fragmentation of the Golgi during apoptosis. Also mediates, via its interaction with GOLGA2/GM130, the docking of transport vesicles with the Golgi membranes. Mediates ER stress-induced unconventional (ER/Golgi-independent) trafficking of core-glycosylated CFTR to cell membrane. The protein is Golgi reassembly-stacking protein 1 (Gorasp1) of Mus musculus (Mouse).